The following is a 334-amino-acid chain: Phenazine-1-carboxylate N-methyltransferase (334 aa).

S-adenosyl-L-methionine contacts are provided by Asp-198 and Arg-241.

It belongs to the class I-like SAM-binding methyltransferase superfamily. Cation-independent O-methyltransferase family. Homodimer in solution. Probably interacts transiently with PhzS.

It catalyses the reaction phenazine-1-carboxylate + S-adenosyl-L-methionine = 5-methyl-phenazine-1-carboxylate + S-adenosyl-L-homocysteine. Its pathway is secondary metabolite biosynthesis; pyocyanine biosynthesis. Its activity is regulated as follows. In vitro, requires PhzS for activity. Involved in the biosynthesis of pyocyanine, a blue-pigmented phenazine derivative, which plays a role in virulence. Converts phenazine-1-carboxylate (PCA) to 5-methylphenazine-1-carboxylate (5-methyl-PCA). The sequence is that of Phenazine-1-carboxylate N-methyltransferase from Pseudomonas aeruginosa (strain ATCC 15692 / DSM 22644 / CIP 104116 / JCM 14847 / LMG 12228 / 1C / PRS 101 / PAO1).